The following is a 127-amino-acid chain: Fluoride-specific ion channel FluC 1 (127 aa).

The next 4 helical transmembrane spans lie at 4-24 (TLLAVFIGGGVGSMARWLVSL), 35-55 (VGTLIVNLVGAFIIGLTLALF), 71-91 (TGFCGGLTTFSTFSVEVVYLI), and 101-121 (GTILLNVAGSLAMTMLAFILV). Residues Gly75 and Thr78 each coordinate Na(+).

The protein belongs to the fluoride channel Fluc/FEX (TC 1.A.43) family.

The protein localises to the cell inner membrane. The enzyme catalyses fluoride(in) = fluoride(out). Na(+) is not transported, but it plays an essential structural role and its presence is essential for fluoride channel function. Functionally, fluoride-specific ion channel. Important for reducing fluoride concentration in the cell, thus reducing its toxicity. The protein is Fluoride-specific ion channel FluC 1 of Yersinia pseudotuberculosis serotype I (strain IP32953).